The primary structure comprises 542 residues: Probable spastin homolog spas-1 (542 aa).

Positions 29–66 (RAAIEMDELTKQNGTINEKLQTAELYKQARQMLKEANE) form a coiled coil. The segment at 131-177 (ATVPGDKKVSKVKQTEKAPHVCSRGDRCGAHQPPPEKKSTPLKPVNQ) is disordered. A compositionally biased stretch (basic and acidic residues) spans 135–169 (GDKKVSKVKQTEKAPHVCSRGDRCGAHQPPPEKKS). 309-316 (GPPGNGKT) lines the ATP pocket.

It belongs to the AAA ATPase family. Spastin subfamily. As to quaternary structure, homohexamer. The homohexamer is stabilized by ATP-binding. The homohexamer may adopt a ring conformation through which microtubules pass prior to being severed. Interacts with microtubules.

The protein localises to the cytoplasm. It localises to the cytoskeleton. The protein resides in the perinuclear region. The enzyme catalyses n ATP + n H2O + a microtubule = n ADP + n phosphate + (n+1) alpha/beta tubulin heterodimers.. Its function is as follows. Severs microtubules, probably in an ATP-dependent fashion. The sequence is that of Probable spastin homolog spas-1 (spas-1) from Caenorhabditis briggsae.